The sequence spans 754 residues: Pentatricopeptide repeat-containing protein At3g53700, chloroplastic (754 aa).

The N-terminal 72 residues, 1 to 72, are a transit peptide targeting the chloroplast; that stretch reads MAFSSCLKFY…DSAALRLFNL (72 aa). 17 PPR repeats span residues 82–116, 117–152, 153–187, 188–222, 223–257, 258–288, 294–328, 329–363, 364–398, 399–433, 434–468, 469–503, 504–538, 539–573, 574–608, 609–643, and 645–680; these read EPAL…RCEM, GTST…GLKP, DTHF…GIKP, DVST…GLVP, DEKT…GCSW, SNVS…MSNQ, DQYT…GYDP, DVYT…DCSP, NTVT…GILP, DVCT…GCEP, DEFT…GCAR, SVIT…GVSR, NSVT…GQKP, DKYT…GCEP, DIVT…GINL, TPHA…NEAP, and DAVS…GFVP.

This sequence belongs to the PPR family. P subfamily.

It localises to the plastid. It is found in the chloroplast. In terms of biological role, may be involved in female gametophyte development. The polypeptide is Pentatricopeptide repeat-containing protein At3g53700, chloroplastic (MEE40) (Arabidopsis thaliana (Mouse-ear cress)).